The following is a 502-amino-acid chain: Probable cytosol aminopeptidase (502 aa).

The Mn(2+) site is built by Lys269 and Asp274. The active site involves Lys281. Positions 292, 351, and 353 each coordinate Mn(2+). Arg355 is an active-site residue.

This sequence belongs to the peptidase M17 family. Mn(2+) serves as cofactor.

The protein resides in the cytoplasm. The catalysed reaction is Release of an N-terminal amino acid, Xaa-|-Yaa-, in which Xaa is preferably Leu, but may be other amino acids including Pro although not Arg or Lys, and Yaa may be Pro. Amino acid amides and methyl esters are also readily hydrolyzed, but rates on arylamides are exceedingly low.. The enzyme catalyses Release of an N-terminal amino acid, preferentially leucine, but not glutamic or aspartic acids.. Presumably involved in the processing and regular turnover of intracellular proteins. Catalyzes the removal of unsubstituted N-terminal amino acids from various peptides. This Shewanella denitrificans (strain OS217 / ATCC BAA-1090 / DSM 15013) protein is Probable cytosol aminopeptidase.